An 826-amino-acid chain; its full sequence is Putative ankyrin repeat protein RBE_0220 (826 aa).

8 ANK repeats span residues 308–337 (LGTS…DQHA), 342–371 (IDMS…DPNY), 375–404 (DNDT…DPNK), 445–474 (NDFT…DVNA), 478–507 (DGFT…NPDV), 512–541 (TKSS…NPNL), 545–574 (DGTT…DINK), and 578–607 (NGDN…DLKK).

This is Putative ankyrin repeat protein RBE_0220 from Rickettsia bellii (strain RML369-C).